The sequence spans 418 residues: Trimethyllysine dioxygenase, mitochondrial (418 aa).

3 residues coordinate Fe cation: histidine 239, aspartate 241, and histidine 386.

Belongs to the gamma-BBH/TMLD family. As to quaternary structure, homodimer. It depends on Fe(2+) as a cofactor. L-ascorbate serves as cofactor.

The protein resides in the mitochondrion matrix. The catalysed reaction is N(6),N(6),N(6)-trimethyl-L-lysine + 2-oxoglutarate + O2 = (3S)-3-hydroxy-N(6),N(6),N(6)-trimethyl-L-lysine + succinate + CO2. The protein operates within amine and polyamine biosynthesis; carnitine biosynthesis. In terms of biological role, converts trimethyllysine (TML) into hydroxytrimethyllysine (HTML). In Gallus gallus (Chicken), this protein is Trimethyllysine dioxygenase, mitochondrial (TMLHE).